We begin with the raw amino-acid sequence, 1207 residues long: Dermatan-sulfate epimerase-like protein (1207 aa).

The first 22 residues, 1 to 22, serve as a signal peptide directing secretion; the sequence is MAFMFTEHLLFLTLMMCSFSTC. Residues N28, N661, N683, and N704 are each glycosylated (N-linked (GlcNAc...) asparagine). Transmembrane regions (helical) follow at residues 761-781 and 798-818; these read FPFG…SLVI and CVLI…WSTC. N869 is a glycosylation site (N-linked (GlcNAc...) asparagine).

It belongs to the dermatan-sulfate isomerase family.

Its subcellular location is the membrane. This chain is Dermatan-sulfate epimerase-like protein (Dsel), found in Mus musculus (Mouse).